The chain runs to 892 residues: Transposase for transposon Tn4556 (892 aa).

The span at 1–12 (MGGRAGLDDGRG) shows a compositional bias: basic and acidic residues. Residues 1-63 (MGGRAGLDDG…GQPARDAEHR (63 aa)) form a disordered region. The span at 23 to 34 (VAEGAAGAAAWG) shows a compositional bias: low complexity.

This sequence belongs to the transposase 7 family.

Its function is as follows. Required for transposition of transposon Tn4556. The protein is Transposase for transposon Tn4556 (tnpA) of Streptomyces fradiae (Streptomyces roseoflavus).